Reading from the N-terminus, the 299-residue chain is Putative adenosine/adenine deaminase (299 aa).

2 residues coordinate Zn(2+): His-16 and His-18. Residues His-18 and Gly-157 each contribute to the substrate site. Position 184 (His-184) interacts with Zn(2+). The active-site Proton donor is the Glu-187. Asp-265 serves as a coordination point for Zn(2+). Asp-266 lines the substrate pocket.

It belongs to the metallo-dependent hydrolases superfamily. Adenosine and AMP deaminases family. It depends on Zn(2+) as a cofactor.

Functionally, putative nucleoside deaminase. May catalyze the hydrolytic deamination of adenosine or some similar substrate and play a role in purine metabolism. In Treponema pallidum (strain Nichols), this protein is Putative adenosine/adenine deaminase.